We begin with the raw amino-acid sequence, 294 residues long: Large ribosomal subunit protein uL18B (294 aa).

The protein belongs to the universal ribosomal protein uL18 family. As to quaternary structure, component of the large ribosomal subunit (LSU). Mature yeast ribosomes consist of a small (40S) and a large (60S) subunit. The 40S small subunit contains 1 molecule of ribosomal RNA (18S rRNA) and 33 different proteins (encoded by 57 genes). The large 60S subunit contains 3 rRNA molecules (25S, 5.8S and 5S rRNA) and 46 different proteins (encoded by 81 genes). Component of a hexameric 5S RNP precursor complex, composed of 5S RNA, rrs1, rpf2, rpl5a/rpl5b, rpl11a/rpl11b and syo1; this complex acts as a precursor for ribosome assembly. rpl5a/rpl5b/uL18 forms a heterotrimeric complex with syo1 and rpl11a/rpl11b/uL5. Interaction of this complex with KAP104 allows the nuclear import of the heterotrimer.

Its subcellular location is the cytoplasm. It is found in the nucleus. Functionally, component of the ribosome, a large ribonucleoprotein complex responsible for the synthesis of proteins in the cell. The small ribosomal subunit (SSU) binds messenger RNAs (mRNAs) and translates the encoded message by selecting cognate aminoacyl-transfer RNA (tRNA) molecules. The large subunit (LSU) contains the ribosomal catalytic site termed the peptidyl transferase center (PTC), which catalyzes the formation of peptide bonds, thereby polymerizing the amino acids delivered by tRNAs into a polypeptide chain. The nascent polypeptides leave the ribosome through a tunnel in the LSU and interact with protein factors that function in enzymatic processing, targeting, and the membrane insertion of nascent chains at the exit of the ribosomal tunnel. The sequence is that of Large ribosomal subunit protein uL18B (rpl502) from Schizosaccharomyces pombe (strain 972 / ATCC 24843) (Fission yeast).